The chain runs to 138 residues: MEIILVGHAHTAKAFKEAVEMIYGEVPNFHPIDFTPKEGLQSLTDKIVSAIEPGKTASTLIITDLFSGTPYNASAELVLKKKAADVVAGMCLPMLLEVAVNANNMSVSQLVSHLMKIKEEFSTSLSEKMTTNAKEDDF.

Positions 1–125 (MEIILVGHAH…KIKEEFSTSL (125 aa)) constitute a PTS EIIA type-4 domain. His8 (tele-phosphohistidine intermediate) is an active-site residue. Position 8 is a phosphohistidine; by HPr (His8).

It is found in the cytoplasm. Its function is as follows. The phosphoenolpyruvate-dependent sugar phosphotransferase system (PTS), a major carbohydrate active transport system, catalyzes the phosphorylation of incoming sugar substrates concomitant with their translocation across the cell membrane. The enzyme II SorABCD PTS system is involved in L-sorbose transport. The sequence is that of PTS system sorbose-specific EIIA component from Lacticaseibacillus casei (Lactobacillus casei).